Reading from the N-terminus, the 533-residue chain is Peptidyl-prolyl cis-trans isomerase-like 2 (533 aa).

The U-box domain occupies 38–111 (KRLPFYCCSL…DEYFCPVTYK (74 aa)). Positions 284-438 (KKSYARIITN…REIKIKQIQM (155 aa)) constitute a PPIase cyclophilin-type domain. The stretch at 443-519 (FEEYQRRLKN…SNEGEELQKK (77 aa)) forms a coiled coil. The span at 454 to 477 (LTHEANAERENEEMRKRREKEEKM) shows a compositional bias: basic and acidic residues. The disordered stretch occupies residues 454-533 (LTHEANAERE…KTTFGNFDNF (80 aa)). Polar residues predominate over residues 523–533 (TKTTFGNFDNF).

Belongs to the cyclophilin-type PPIase family. PPIL2 subfamily.

It localises to the nucleus. The enzyme catalyses [protein]-peptidylproline (omega=180) = [protein]-peptidylproline (omega=0). It carries out the reaction S-ubiquitinyl-[E2 ubiquitin-conjugating enzyme]-L-cysteine + [acceptor protein]-L-lysine = [E2 ubiquitin-conjugating enzyme]-L-cysteine + N(6)-ubiquitinyl-[acceptor protein]-L-lysine.. The protein operates within protein modification; protein ubiquitination. Its function is as follows. May catalyze the cis-trans isomerization of proline imidic peptide bonds in oligopeptides thereby assisting the folding of proteins. May also function as a chaperone, playing a role in intracellular transport of proteins. May also have a protein ubiquitin ligase activity acting as an E3 ubiquitin protein ligase or as a ubiquitin-ubiquitin ligase promoting elongation of ubiquitin chains on proteins. The sequence is that of Peptidyl-prolyl cis-trans isomerase-like 2 (cyp14) from Rhizopus delemar (strain RA 99-880 / ATCC MYA-4621 / FGSC 9543 / NRRL 43880) (Mucormycosis agent).